Reading from the N-terminus, the 266-residue chain is MVCLKLPGGSSLAALTVTLMVLSSRLAFAGDTRPRFLELRKSECHFFNGTERVRYLDRYFHNQEEFLRFDSDVGEYRAVTELGRPVAESWNSQKDLLEQKRGRVDNYCRHNYGVGESFTVQRRVHPQVTVYPAKTQPLQHHNLLVCSVSGFYPGSIEVRWFRNGQEEKAGVVSTGLIQNGDWTFQTLVMLETVPRSGEVYTCQVEHPSVTSALTVEWRARSESAQSKMLSGVGGFVLGLLFLGAGLFIYFRNQKGHSGLQPTGFLS.

Positions 1-29 (MVCLKLPGGSSLAALTVTLMVLSSRLAFA) are cleaved as a signal peptide. The segment at 30–124 (GDTRPRFLEL…GESFTVQRRV (95 aa)) is beta-1. Topologically, residues 30–227 (GDTRPRFLEL…RARSESAQSK (198 aa)) are extracellular. Intrachain disulfides connect C44-C108 and C146-C202. Residue N48 is glycosylated (N-linked (GlcNAc...) asparagine). Positions 125-227 (HPQVTVYPAK…RARSESAQSK (103 aa)) are beta-2. The Ig-like C1-type domain occupies 126-214 (PQVTVYPAKT…EHPSVTSALT (89 aa)). A helical membrane pass occupies residues 228 to 248 (MLSGVGGFVLGLLFLGAGLFI). The Cytoplasmic segment spans residues 249–266 (YFRNQKGHSGLQPTGFLS).

Belongs to the MHC class II family. Heterotrimer that consists of an alpha chain HLA-DRA, a beta chain HLA-DRB1 and a peptide (peptide-MHCII). Newly synthesized alpha and beta chains forms a heterodimer (MHCII) that associates with the CD74/invariant chain (Ii) in the endoplasmic reticulum (ER). Ii is a trimer composed of three subunits and each subunit interacts with one MHCII dimer, blocking the peptide-binding cleft. As a result, MHCII molecules cannot bind peptides present in the ER. The complex of MHCII and CD74/Ii is transported in vesicles from ER to Golgi to lysosomes, where it encounters antigenic peptides generated via proteolysis of endocytosed antigens. MHCII dimers are dissociated from CD74/Ii by the combined action of proteolysis and HLA-DM. Lysosomal enzymes such as cathepsin, degrade CD74/Ii leaving a 24 amino acid remnant called class II-associated Ii or CLIP. Interacts (via the peptide binding cleft) with CLIP; this interaction inhibits antigen peptide binding before entry in the endosomal compartment. The displacement of CLIP and replacement by a high affinity peptide in lysosomes is performed by HLA-DM heterodimer. HLA-DM catalyzes CLIP dissociation from MHCII, stabilizes empty MHCII and mediates the selection of high affinity peptides. Interacts with HLA-DM heterodimer; this interaction is direct. Interacts with TCR (via CDR3). Interacts (via beta-2 domain) with CD4 coreceptor (via Ig-like V-type domain); this interaction is of exceptionally low affinity yet necessary for optimal recognition of antigenic peptides. In terms of processing, ubiquitinated by MARCHF1 and MARCHF8 at Lys-254 leading to sorting into the endosome system and down-regulation of MHC class II. As to expression, expressed in professional APCs: monocyte/macrophages, dendritic cells and B cells (at protein level).

Its subcellular location is the cell membrane. The protein resides in the endoplasmic reticulum membrane. It is found in the lysosome membrane. It localises to the late endosome membrane. The protein localises to the autolysosome membrane. Its function is as follows. A beta chain of antigen-presenting major histocompatibility complex class II (MHCII) molecule. In complex with the alpha chain HLA-DRA, displays antigenic peptides on professional antigen presenting cells (APCs) for recognition by alpha-beta T cell receptor (TCR) on HLA-DRB3-restricted CD4-positive T cells. This guides antigen-specific T-helper effector functions, both antibody-mediated immune response and macrophage activation, to ultimately eliminate the infectious agents and transformed cells. Typically presents extracellular peptide antigens of 10 to 30 amino acids that arise from proteolysis of endocytosed antigens in lysosomes. In the tumor microenvironment, presents antigenic peptides that are primarily generated in tumor-resident APCs likely via phagocytosis of apoptotic tumor cells or macropinocytosis of secreted tumor proteins. Presents peptides derived from intracellular proteins that are trapped in autolysosomes after macroautophagy, a mechanism especially relevant for T cell selection in the thymus and central immune tolerance. The selection of the immunodominant epitopes follows two processing modes: 'bind first, cut/trim later' for pathogen-derived antigenic peptides and 'cut first, bind later' for autoantigens/self-peptides. The anchor residue at position 1 of the peptide N-terminus, usually a large hydrophobic residue, is essential for high affinity interaction with MHCII molecules. In terms of biological role, ALLELE DRB3*01:01: Exclusively presents several immunogenic epitopes derived from C.tetani neurotoxin tetX, playing a significant role in immune recognition and long-term protection. Presents viral epitopes derived from HHV-6B U11, TRX2/U56 and U85 antigens to polyfunctional CD4-positive T cells with cytotoxic activity implicated in control of HHV-6B infection. ALLELE DRB3*02:02 Exclusively presents several immunogenic epitopes derived from C.tetani neurotoxin tetX, playing a significant role in immune recognition and long-term protection. Upon EBV infection, presents to CD4-positive T cells latent antigen EBNA2 (PRSPTVFYNIPPMPLPPSQL) and lytic antigen BZLF1 (LTAYHVSTAPTGSWF) peptides, driving oligoclonal expansion and selection of virus-specific memory T cell subsets with cytotoxic potential to directly eliminate virus-infected B cells. Presents viral epitopes derived from HHV-6B U11, gB/U39 and gH/U48 antigens to polyfunctional CD4-positive T cells with cytotoxic activity implicated in control of HHV-6B infection. Plays a minor role in CD4-positive T cell immune response against Dengue virus by presenting conserved peptides from capsid and non-structural NS3 proteins. Displays peptides derived from IAV matrix protein M, implying a role in protection against IAV infection. In the context of tumor immunesurveillance, may present to T-helper 1 cells an immunogenic epitope derived from tumor-associated antigen WT1 (KRYFKLSHLQMHSRKH), likely providing for effective antitumor immunity in a wide range of solid and hematological malignancies. Presents to Vbeta2-positive T-helper 1 cells specifically an immunodominant peptide derived from tumor antigen CTAG1A/NY-ESO-1(PGVLLKEFTVSGNILTIRLTAADHR) and confers protective memory response. In metastatic epithelial tumors, presents to intratumoral CD4-positive T cells a TP53 neoantigen (HYNYMCNSSCMGSMNRRPILTIITL) carrying G245S hotspot driver mutation and may mediate tumor regression. Functionally, ALLELE DRB3*03:01: Presents a series of conserved peptides derived from the M.tuberculosis PPE family of proteins, in particular PPE29 and PPE33, known to be highly immunogenic. Presents immunogenic epitopes derived from C.tetani neurotoxin tetX, playing a role in immune recognition and long-term protection. Displays immunodominant viral peptides from HCV non-structural protein NS2, as part of a broad range T-helper response to resolve infection. This is HLA class II histocompatibility antigen, DR beta 3 chain (HLA-DRB3) from Homo sapiens (Human).